The sequence spans 508 residues: ATP synthase subunit alpha, chloroplastic (508 aa).

170 to 177 lines the ATP pocket; the sequence is GDRQTGKT.

It belongs to the ATPase alpha/beta chains family. F-type ATPases have 2 components, CF(1) - the catalytic core - and CF(0) - the membrane proton channel. CF(1) has five subunits: alpha(3), beta(3), gamma(1), delta(1), epsilon(1). CF(0) has four main subunits: a, b, b' and c.

It localises to the plastid. It is found in the chloroplast thylakoid membrane. It catalyses the reaction ATP + H2O + 4 H(+)(in) = ADP + phosphate + 5 H(+)(out). Produces ATP from ADP in the presence of a proton gradient across the membrane. The alpha chain is a regulatory subunit. This chain is ATP synthase subunit alpha, chloroplastic, found in Lactuca sativa (Garden lettuce).